A 163-amino-acid chain; its full sequence is T-cell surface glycoprotein CD3 zeta chain (163 aa).

An N-terminal signal peptide occupies residues 1-21 (MKWKALFTAAILQAQLPITEA). Topologically, residues 22–30 (QSFGLLDPK) are extracellular. The chain crosses the membrane as a helical span at residues 31-51 (LCYLLDGILFIYGVILTALFL). The Cytoplasmic portion of the chain corresponds to 52 to 163 (RVKFSRSADA…ALHMQALPPR (112 aa)). Phosphoserine is present on Ser58. 3 ITAM domains span residues 61–89 (APAYQQGQNQLYNELNLGRREEYDVLDKR), 99–127 (KPRRKNPQEGLYNELQKDKMAEAYSEIGM), and 130–158 (ERRRGKGHDGLYQGLSTATKDTYDALHMQ). Phosphotyrosine is present on residues Tyr64, Tyr72, Tyr83, Tyr110, Tyr122, Tyr141, and Tyr152. The segment covering 83-98 (YDVLDKRRGRDPEMGG) has biased composition (basic and acidic residues). The interval 83 to 111 (YDVLDKRRGRDPEMGGKPRRKNPQEGLYN) is disordered.

It belongs to the CD3Z/FCER1G family. As to quaternary structure, the TCR-CD3 complex is composed of a CD3D/CD3E and a CD3G/CD3E heterodimers that preferentially associate with TCRalpha and TCRbeta, respectively, to form TCRalpha/CD3E/CD3G and TCRbeta/CD3G/CD3E trimers. In turn, the hexamer interacts with CD3Z homodimer to form the TCR-CD3 complex. Alternatively, TCRalpha and TCRbeta can be replaced by TCRgamma and TCRdelta. Interacts with SLA. Interacts with TRAT1. Interacts with DOCK2. Interacts with SLA2. Interacts with SHB. Interacts with ZAP70. Interacts (tyrosine phosphorylated) with SHC1 (via SH2 domain). Interacts with PTPRC. Interacts with CRK; this interaction regulates CD3Z phosphorylation. Interacts (on T cell side) with CD81, ICAM1 and CD9 at immunological synapses between antigen-presenting cells and T cells. Interacts with CD160. Interacts with LY6E. Interacts with LY6E. The signaling subunit of immunoglobulin gamma (IgG) Fc receptor complex. As a homodimer or a heterodimer with FCER1G, associates with the ligand binding subunit FCGR3A (via transmembrane domain); this interaction is a prerequisite for Fc receptor complex expression on the cell surface. Interacts with CD5. Post-translationally, phosphorylated on Tyr residues after T-cell receptor triggering by LCK in association with CD4/CD8.

It is found in the cell membrane. Functionally, part of the TCR-CD3 complex present on T-lymphocyte cell surface that plays an essential role in adaptive immune response. When antigen presenting cells (APCs) activate T-cell receptor (TCR), TCR-mediated signals are transmitted across the cell membrane by the CD3 chains CD3D, CD3E, CD3G and CD3Z. All CD3 chains contain immunoreceptor tyrosine-based activation motifs (ITAMs) in their cytoplasmic domain. Upon TCR engagement, these motifs become phosphorylated by Src family protein tyrosine kinases LCK and FYN, resulting in the activation of downstream signaling pathways. CD3Z ITAMs phosphorylation creates multiple docking sites for the protein kinase ZAP70 leading to ZAP70 phosphorylation and its conversion into a catalytically active enzyme. Plays an important role in intrathymic T-cell differentiation. Additionally, participates in the activity-dependent synapse formation of retinal ganglion cells (RGCs) in both the retina and dorsal lateral geniculate nucleus (dLGN). This Sus scrofa (Pig) protein is T-cell surface glycoprotein CD3 zeta chain (CD247).